The chain runs to 104 residues: Late embryogenis abundant protein 41 (104 aa).

The transit peptide at 1-31 (MAARSLSGAVKSLCSAASGSLSCSIVLRRSY) directs the protein to the mitochondrion.

This sequence belongs to the LEA type 3 family.

It is found in the mitochondrion. The sequence is that of Late embryogenis abundant protein 41 from Arabidopsis thaliana (Mouse-ear cress).